A 1315-amino-acid polypeptide reads, in one-letter code: Activating molecule in BECN1-regulated autophagy protein 1A (1315 aa).

WD repeat units follow at residues 50–89 (DSPRSTFLLAFSPDRSLMASTHVNHNIYITEVKSGKCVHS), 92–132 (GHRR…ESWL), and 134–174 (ESNS…TVVK). Disordered stretches follow at residues 294–322 (RVPSPPDEDPSDSASLEAQAHTFSSARTE), 342–409 (FSSV…QRTG), 426–463 (FQSPVYTSASDRWGSTPGTSSSRHRPPEEEGQSSSSSI), 502–526 (NNNMDPEQPGPSHYQSPYSGENPPH), 545–610 (SRRW…DTGQ), 630–660 (VYRQSASSRSANISQGALNQEMPEDTPDNDY), 681–736 (RDSV…PRNA), 985–1134 (HSDG…STGQ), 1181–1208 (GSQTGADAQNRTRLSPIPGPSSGAPESL), and 1286–1315 (LLSSSPSLSPVNNSNYSNSDSSYLGDEYGR). Over residues 351–360 (NMRNHSSSSG) the composition is skewed to polar residues. Positions 378 to 388 (PGREGGGRHPG) are enriched in basic and acidic residues. 2 stretches are compositionally biased toward polar residues: residues 394–409 (SGLNGQSSSMTPQRTG) and 426–435 (FQSPVYTSAS). Polar residues-rich tracts occupy residues 552–581 (GQPSSTERNTPWQPSSSAFHSVAPVSQSNE) and 633–647 (QSASSRSANISQGAL). Over residues 696 to 715 (RPLSSNPSSLSPSPVPNAES) the composition is skewed to low complexity. A compositionally biased stretch (acidic residues) spans 716 to 725 (SEVDFEEFEE). The span at 1009 to 1021 (PSSSRSGDRAGSS) shows a compositional bias: low complexity. The span at 1022–1031 (RTDRRSRRDI) shows a compositional bias: basic and acidic residues. The span at 1047-1060 (SVTSQGTQTQNQRL) shows a compositional bias: polar residues. Short sequence motifs (TQT motif) lie at residues 1053-1055 (TQT) and 1065-1067 (TQT). Positions 1061 to 1072 (QHAETQTDRDLP) are enriched in basic and acidic residues. A compositionally biased stretch (polar residues) spans 1076-1090 (QQPSTSQGSQVTDAT). Acidic residues predominate over residues 1091–1103 (ESLDFETLPEDSG). Polar residues-rich tracts occupy residues 1125–1134 (SEPSTDSTGQ) and 1181–1193 (GSQTGADAQNRTR). Over residues 1286 to 1307 (LLSSSPSLSPVNNSNYSNSDSS) the composition is skewed to low complexity.

Belongs to the WD repeat AMBRA1 family. Component of the DCX(AMBRA1) E3 ubiquitin ligase complex.

It is found in the endoplasmic reticulum. It localises to the cytoplasm. The protein localises to the cytoskeleton. Its subcellular location is the cytoplasmic vesicle. The protein resides in the autophagosome. It is found in the mitochondrion. It localises to the cytosol. The protein localises to the nucleus. Its subcellular location is the cell junction. The protein resides in the focal adhesion. It participates in protein modification; protein ubiquitination. Functionally, substrate-recognition component of a DCX (DDB1-CUL4-X-box) E3 ubiquitin-protein ligase complex involved in cell cycle control and autophagy. The DCX(AMBRA1) complex specifically mediates the polyubiquitination of target proteins. Acts as an upstream master regulator of the transition from G1 to S cell phase: ambra1a specifically recognizes and binds phosphorylated cyclin-D (ccnd1, ccnd2 and ccnd3), leading to cyclin-D ubiquitination by the DCX(AMBRA1) complex and subsequent degradation. Acts as a regulator of Cul5-RING (CRL5) E3 ubiquitin-protein ligase complexes by mediating ubiquitination and degradation of Elongin-C (eloc) component of CRL5 complexes. Acts as a key regulator of autophagy by modulating the BECN1-PIK3C3 complex: controls protein turnover during neuronal development, and regulates normal cell survival and proliferation. In normal conditions, ambra1a is tethered to the cytoskeleton via interaction with dyneins light chains. Upon autophagy induction, ambra1a is released from the cytoskeletal docking site to induce autophagosome nucleation by mediating ubiquitination of proteins involved in autophagy. Also acts as an activator of mitophagy. Required for skeletal muscle development. In Danio rerio (Zebrafish), this protein is Activating molecule in BECN1-regulated autophagy protein 1A.